Consider the following 1479-residue polypeptide: MAPLLGRKPFPLVKPLPGEEPLFTIPHTQEAFRTREEYEARLERYSERIWTCKSTGSSQLTHKEAWEEEQEVAELLKEEFPNWYEKLVLEMVHHNTASLEKLVDSAWLEIMTKYAVGEECDFEVGKEKMLKVKIVKIHPLEKVDEEAVEKKSDGACDSPSSDKENSSQMAQDLQKKETVVKEDEGRRESINDRARRSPRKLPTSLKKGERKWAPPKFLPHKYDVKLQNEDKIISNVPADSLIRTERPPNKEILRYFIRHNALRAGTGENAPWVVEDELVKKYSLPSKFSDFLLDPYKYMTLNPSTKRRNTGSPDRKPSKKPKRDSSSLSSPLNPKLWCHVHLEKSLNGPPLKVKNSKNSKSPEEHLEGVMKIMSPNNNKLHSFHIPKKGPAAKKPGKHSDKPLKAKGRGKGILNGQKSTGNSKSPSKCVKTPKTKMKQMTLLDMAKGTQKMTRTPRSSGGVPRSSGKPHKHLPPAALHLIAYYKENKDKEDKKSALSCVISKTARLLSNEDRARLPEELRALVQKRYELLEHKKRWASMSEEQRKEYLKKKRQELKERLREKAKERREREMLERLEKQKRFEDQELGGRNLPAFRLVDTPEGLPNTLFGDVALVVEFLSCYSGLLLPDAQYPITAVSLMEALSADKGGFLYLNRVLVILLQTLLQDEIAEDYGELGMKLSEIPLTLHSVSELVRLCLRRCDVQEDSEGSETDDNKDSTPFEDNEVQDEFLEKLETSEFFELTSEEKLRILTALCHRILMTYSVQDHMETRQQVSAELWKERLAVLKEENDKKRAEKQKRKEMEARNKENGKEENVLGKVDRKKEIVKIEQQVEVEADDMISAVKSRRLLSMQAKRKREIQERETKVRLEREAEEERMRKHKAAAEKAFQEGIAKAKLVLRRTPIGTDRNHNRYWLFSNEVPGLFIEKGWVHNSIDYRFKHHRKDHSNLPDDDYCPRSKKANLGKNASVNAHHGPALEAVETTVPKQGQNLWFLCDSQKELDELLSCLHPQGIRESQLKERLEKRYQEITHSIYLARKPNLGLKSCDGNQELLNFLRSDLIEVATRLQKGGLGYMEGTSEFEARVISLEKLKDFGECVIALQASVIKKFLQGFMAPKQKKRKLQSEDSTKSEEVDEEKKMVEEAKVASALEKWKTAIREAQTFSRMHVLLGMLDACIKWDMSAENARCKVCRKKGEDDKLILCDECNKAFHLFCLRPALYEVPDGEWQCPACQPPTARRNSRGRNYTEESTSEGSEGDESGEEEEEEEEEEEEEEDYEVAGLRLRPRKTIRGKQSVIPAARPGRPPGKKSHPARRSRPKDDPEVDDLVLQTKRISRRQSLELQKCEDILHKLVKYRFSWPFREPVTRDEAEDYYDVIEHPMDFQTIQNKCSCGNYRSVQEFLTDMKQVFANAELYNCRGSHVLSCMEKTEQCLLALLQKHLPGHPYVRRKRRKFPDRLADDEGDSDSESVGQSRGRRQKK.

Residues 20-126 (EPLFTIPHTQ…GEECDFEVGK (107 aa)) form the WAC domain. Positions 146 to 212 (EAVEKKSDGA…TSLKKGERKW (67 aa)) are disordered. Basic and acidic residues-rich tracts occupy residues 148-165 (VEKK…DKEN) and 173-195 (LQKK…DRAR). A phosphoserine mark is found at serine 152, serine 158, and serine 161. The C motif motif lies at 207 to 213 (KGERKWA). The residue at position 266 (threonine 266) is a Phosphothreonine. The tract at residues 302–333 (NPSTKRRNTGSPDRKPSKKPKRDSSSLSSPLN) is disordered. 5 positions are modified to phosphoserine: serine 325, serine 330, serine 345, serine 361, and serine 374. Disordered regions lie at residues 376–433 (NNNK…KTPK) and 448–472 (TQKM…HKHL). Over residues 381-396 (HSFHIPKKGPAAKKPG) the composition is skewed to basic residues. Polar residues predominate over residues 415-425 (GQKSTGNSKSP). A compositionally biased stretch (low complexity) spans 454–465 (TPRSSGGVPRSS). The stretch at 537-587 (ASMSEEQRKEYLKKKRQELKERLREKAKERREREMLERLEKQKRFEDQELG) forms a coiled coil. The region spanning 605 to 669 (NTLFGDVALV…LQTLLQDEIA (65 aa)) is the DDT domain. Residues serine 706, serine 709, and serine 717 each carry the phosphoserine modification. Residues 774 to 809 (SAELWKERLAVLKEENDKKRAEKQKRKEMEARNKEN) are a coiled coil. The disordered stretch occupies residues 789–813 (NDKKRAEKQKRKEMEARNKENGKEE). Lysine 827 is covalently cross-linked (Glycyl lysine isopeptide (Lys-Gly) (interchain with G-Cter in SUMO1); alternate). Residue lysine 827 forms a Glycyl lysine isopeptide (Lys-Gly) (interchain with G-Cter in SUMO2); alternate linkage. Residues lysine 854, lysine 1043, lysine 1089, and lysine 1107 each participate in a glycyl lysine isopeptide (Lys-Gly) (interchain with G-Cter in SUMO2) cross-link. The stretch at 854–890 (KRKREIQERETKVRLEREAEEERMRKHKAAAEKAFQE) forms a coiled coil. The PHD-type zinc finger occupies 1184 to 1234 (NARCKVCRKKGEDDKLILCDECNKAFHLFCLRPALYEVPDGEWQCPACQPP). Residues 1231 to 1324 (CQPPTARRNS…SRPKDDPEVD (94 aa)) are disordered. Residues 1254 to 1277 (SEGDESGEEEEEEEEEEEEEEDYE) are compositionally biased toward acidic residues. Residues 1257–1284 (DESGEEEEEEEEEEEEEEDYEVAGLRLR) are a coiled coil. Over residues 1305 to 1316 (PGKKSHPARRSR) the composition is skewed to basic residues. Phosphoserine is present on serine 1315. Residue lysine 1331 is modified to N6-acetyllysine. The Bromo domain occupies 1335–1439 (RRQSLELQKC…QCLLALLQKH (105 aa)). Phosphoserine is present on residues serine 1338, serine 1464, serine 1466, and serine 1468. Residues 1451–1479 (RKFPDRLADDEGDSDSESVGQSRGRRQKK) are disordered.

It belongs to the WAL family. BAZ1B subfamily. In terms of assembly, component of the WICH-1 ISWI chromatin remodeling complex, at least composed of SMARCA1 and BAZ1B/WSTF, which regulates the spacing of histone octamers on the DNA template to facilitate access to DNA. Within the WICH-1 ISWI chromatin remodeling complex interacts with SMARCA1; the interaction is direct. Component of the WICH-5 ISWI chromatin remodeling complex (also called the WICH complex), at least composed of SMARCA5/SNF2H and BAZ1B/WSTF, which regulates the spacing of histone octamers on the DNA template to facilitate access to DNA. Within the WICH-5 ISWI chromatin remodeling complex interacts with SMARCA5/SNF2H; the interaction is direct. Component of the B-WICH chromatin remodeling complex, at least composed of SMARCA5/SNF2H, BAZ1B/WSTF, SF3B1, DEK, MYO1C, ERCC6, MYBBP1A and DDX21. Within the B-WICH chromatin remodeling complex, interacts with SMARCA5/SNF2H, DDX21, DEK, MYBBP1A, SF3B1 and ERCC6. Interacts with MYO1C. Interacts with PCNA; the interaction is direct and is required for BAZ1B/WSTF binding to replication foci during S phase. Interacts with CDT1. Mn(2+) serves as cofactor.

It localises to the nucleus. It carries out the reaction L-tyrosyl-[protein] + ATP = O-phospho-L-tyrosyl-[protein] + ADP + H(+). Functionally, atypical tyrosine-protein kinase that plays a central role in chromatin remodeling and acts as a transcription regulator. Involved in DNA damage response by phosphorylating 'Tyr-142' of histone H2AX (H2AXY142ph). H2AXY142ph plays a central role in DNA repair and acts as a mark that distinguishes between apoptotic and repair responses to genotoxic stress. Regulatory subunit of the ATP-dependent WICH-1 and WICH-5 ISWI chromatin remodeling complexes, which form ordered nucleosome arrays on chromatin and facilitate access to DNA during DNA-templated processes such as DNA replication, transcription, and repair. Both complexes regulate the spacing of nucleosomes along the chromatin and have the ability to slide mononucleosomes to the center of a DNA template. The WICH-1 ISWI chromatin remodeling complex has a lower ATP hydrolysis rate than the WICH-5 ISWI chromatin remodeling complex. The WICH-5 ISWI chromatin remodeling complex regulates the transcription of various genes, has a role in RNA polymerase I transcription. Within the B-WICH complex has a role in RNA polymerase III transcription. Mediates the recruitment of the WICH-5 ISWI chromatin remodeling complex to replication foci during DNA replication. The chain is Tyrosine-protein kinase BAZ1B (Baz1b) from Mus musculus (Mouse).